A 188-amino-acid chain; its full sequence is MLQIEFITDLGARVTVNVEHESRLLDVQRHYGRLGWTSGEIPSGGYQFPIENEADFDWSLIGARKWKSPEGEELVIHRGHAYRRRELEAVDSRKLKLPAAIKYSRGAKVSDPQHVREKADGDIEYVSLAIFRGGKRQERYAVPGGAAGNGQGRPAPQGQPAQARPQATAARPAARPPVQPGQEEETPF.

Residues 140-188 (YAVPGGAAGNGQGRPAPQGQPAQARPQATAARPAARPPVQPGQEEETPF) form a disordered region. Residues 152-173 (GRPAPQGQPAQARPQATAARPA) show a composition bias toward low complexity.

Homopentamer arranged in a ring-structure; DNA binds between subunits and along the top of the ring. The pentamers self-associate to coat ssDNA in higher-ordered structures; oligomerization facilitates the assembly of extended nucleoprotein complexes. Self-assembly does not however require ssDNA-binding. Interacts with SSB.

Its function is as follows. ssDNA-binding protein that contributes to the ionizing radiation resistance of D.radiodurans. Plays a role in DNA repair and genome reconstitution in a RecA-independent process. Required for recovery from severe genomic fragmentation as a result of exposure to severe levels of ionizing radiation. Binds ssDNA but not dsDNA. Stimulates annealing of complementary ssDNA. Does not complement an ssb disruption. This Deinococcus radiodurans (strain ATCC 13939 / DSM 20539 / JCM 16871 / CCUG 27074 / LMG 4051 / NBRC 15346 / NCIMB 9279 / VKM B-1422 / R1) protein is Single-stranded DNA-binding protein DdrB (ddrB).